Reading from the N-terminus, the 65-residue chain is DNA-directed RNA polymerase subunit Rpo10 (65 aa).

Positions 7, 10, 44, and 45 each coordinate Zn(2+).

It belongs to the archaeal Rpo10/eukaryotic RPB10 RNA polymerase subunit family. Part of the RNA polymerase complex. The cofactor is Zn(2+).

It is found in the cytoplasm. The catalysed reaction is RNA(n) + a ribonucleoside 5'-triphosphate = RNA(n+1) + diphosphate. In terms of biological role, DNA-dependent RNA polymerase (RNAP) catalyzes the transcription of DNA into RNA using the four ribonucleoside triphosphates as substrates. The protein is DNA-directed RNA polymerase subunit Rpo10 of Pyrococcus furiosus (strain ATCC 43587 / DSM 3638 / JCM 8422 / Vc1).